A 208-amino-acid polypeptide reads, in one-letter code: Small ribosomal subunit protein uS4 (208 aa).

Residues 98–159 (LRLDNVAYRL…AARTHIRIAA (62 aa)) enclose the S4 RNA-binding domain.

The protein belongs to the universal ribosomal protein uS4 family. Part of the 30S ribosomal subunit. Contacts protein S5. The interaction surface between S4 and S5 is involved in control of translational fidelity.

In terms of biological role, one of the primary rRNA binding proteins, it binds directly to 16S rRNA where it nucleates assembly of the body of the 30S subunit. Functionally, with S5 and S12 plays an important role in translational accuracy. This chain is Small ribosomal subunit protein uS4, found in Acidithiobacillus ferrooxidans (strain ATCC 23270 / DSM 14882 / CIP 104768 / NCIMB 8455) (Ferrobacillus ferrooxidans (strain ATCC 23270)).